A 470-amino-acid chain; its full sequence is FAD-dependent monooxygenase dpchE (470 aa).

The first 24 residues, 1-24 (MSEPHFKVIIVGGSITGLTLAHSL), serve as a signal peptide directing secretion. The FAD site is built by E35, G49, and R108. The N-linked (GlcNAc...) asparagine glycan is linked to N128. The active site involves R193. 2 residues coordinate FAD: D312 and A325. A helical membrane pass occupies residues 447-463 (WAVVSRSVLLLVGLAIL).

The protein belongs to the paxM FAD-dependent monooxygenase family. It depends on FAD as a cofactor.

Its subcellular location is the membrane. It participates in secondary metabolite biosynthesis; terpenoid biosynthesis. In terms of biological role, FAD-dependent monooxygenase; part of the gene cluster that mediates the biosynthesis of the diterpenoid pyrones higginsianins A and B. The first step of the pathway is the synthesis of the alpha-pyrone moiety by the polyketide synthase dpchA via condensation of one acetyl-CoA starter unit with 3 malonyl-CoA units and 2 methylations. The alpha-pyrone is then combined with geranylgeranyl pyrophosphate (GGPP) formed by the GGPP synthase dpchD through the action of the prenyltransferase dpchC to yield a linear alpha-pyrone diterpenoid. Subsequent steps in the diterpenoid pyrone biosynthetic pathway involve the decalin core formation, which is initiated by the epoxidation of the C10-C11 olefin by the FAD-dependent oxidoreductase dpchE, and is followed by a cyclization cascade catalyzed by the terpene cyclase dpchB. The short chain dehydrogenase/reductase dpchG then oxidizes the 8S hydroxy group to a ketone and the short chain dehydrogenase/reductase dpchH reduces the ketone to the 8R hydroxy group to yield higginsianin B. Finally, the FAD-dependent oxidoreductase dpchF converts higginsianin B into higginsianin A. This Colletotrichum higginsianum (strain IMI 349063) (Crucifer anthracnose fungus) protein is FAD-dependent monooxygenase dpchE.